A 198-amino-acid polypeptide reads, in one-letter code: NAD(P)H-quinone oxidoreductase chain 6 (198 aa).

5 consecutive transmembrane segments (helical) span residues 9-29, 32-52, 61-81, 100-120, and 145-165; these read YISFLILAFLVIGAALGVVLL, IVYSAFLLGGVFLSISGIYIL, AQVLVYVGAVSVLILFAIMLV, TALVCTGIFALLSTMVLITPW, and LLPFELASVLLLMAMVGAIIL.

This sequence belongs to the complex I subunit 6 family.

The protein resides in the membrane. The enzyme catalyses a plastoquinone + NADH + (n+1) H(+)(in) = a plastoquinol + NAD(+) + n H(+)(out). It catalyses the reaction a plastoquinone + NADPH + (n+1) H(+)(in) = a plastoquinol + NADP(+) + n H(+)(out). Functionally, NDH-1 shuttles electrons from NAD(P)H, via FMN and iron-sulfur (Fe-S) centers, to quinones in the respiratory chain. The immediate electron acceptor for the enzyme in this species is believed to be plastoquinone. Couples the redox reaction to proton translocation (for every two electrons transferred, four hydrogen ions are translocated across the cytoplasmic membrane), and thus conserves the redox energy in a proton gradient. This is NAD(P)H-quinone oxidoreductase chain 6 (ndhG) from Synechocystis sp. (strain ATCC 27184 / PCC 6803 / Kazusa).